The sequence spans 79 residues: Small ribosomal subunit protein bS18 (79 aa).

The protein belongs to the bacterial ribosomal protein bS18 family. As to quaternary structure, part of the 30S ribosomal subunit. Forms a tight heterodimer with protein bS6.

In terms of biological role, binds as a heterodimer with protein bS6 to the central domain of the 16S rRNA, where it helps stabilize the platform of the 30S subunit. The protein is Small ribosomal subunit protein bS18 of Streptococcus pyogenes serotype M49 (strain NZ131).